Reading from the N-terminus, the 612-residue chain is Glutamine--fructose-6-phosphate aminotransferase [isomerizing] (612 aa).

Cys2 acts as the Nucleophile; for GATase activity in catalysis. The 219-residue stretch at 2–220 (CGIVGAIRAH…DGDIALLASD (219 aa)) folds into the Glutamine amidotransferase type-2 domain. SIS domains are found at residues 288-428 (AKSV…VRGL) and 461-602 (WAQQ…VDKP). Catalysis depends on Lys607, which acts as the For Fru-6P isomerization activity.

In terms of assembly, homodimer.

Its subcellular location is the cytoplasm. It catalyses the reaction D-fructose 6-phosphate + L-glutamine = D-glucosamine 6-phosphate + L-glutamate. Functionally, catalyzes the first step in hexosamine metabolism, converting fructose-6P into glucosamine-6P using glutamine as a nitrogen source. This Neisseria meningitidis serogroup A / serotype 4A (strain DSM 15465 / Z2491) protein is Glutamine--fructose-6-phosphate aminotransferase [isomerizing].